Here is a 353-residue protein sequence, read N- to C-terminus: tRNA-specific 2-thiouridylase MnmA 2 (353 aa).

Residues Ala-9–Ser-16 and Met-35 contribute to the ATP site. Cys-98 (nucleophile) is an active-site residue. Cys-98 and Cys-194 are oxidised to a cystine. Position 122 (Gly-122) interacts with ATP. Positions Lys-144 to Gln-146 are interaction with tRNA. The active-site Cysteine persulfide intermediate is the Cys-194. Positions Arg-300–Tyr-301 are interaction with tRNA.

It belongs to the MnmA/TRMU family.

The protein resides in the cytoplasm. It carries out the reaction S-sulfanyl-L-cysteinyl-[protein] + uridine(34) in tRNA + AH2 + ATP = 2-thiouridine(34) in tRNA + L-cysteinyl-[protein] + A + AMP + diphosphate + H(+). Its function is as follows. Catalyzes the 2-thiolation of uridine at the wobble position (U34) of tRNA, leading to the formation of s(2)U34. The polypeptide is tRNA-specific 2-thiouridylase MnmA 2 (Clostridium botulinum (strain Langeland / NCTC 10281 / Type F)).